A 463-amino-acid polypeptide reads, in one-letter code: Oxidoreductase OXR1 (463 aa).

Residues 59-63, Val154, and Asp366 each bind 6-hydroxy-FAD; that span reads GGSYS.

The protein belongs to the FAD-dependent oxidoreductase family. It depends on 6-hydroxy-FAD as a cofactor.

The protein operates within siderophore biosynthesis. Its function is as follows. Oxidoreductase; part of the gene cluster that mediates the biosynthesis of hydroxamate-containing siderophores that play a critical role in virulence via intracellular iron acquisition during macrophage infection. The chain is Oxidoreductase OXR1 from Ajellomyces capsulatus (Darling's disease fungus).